A 119-amino-acid polypeptide reads, in one-letter code: Ribonuclease P protein component (119 aa).

Belongs to the RnpA family. As to quaternary structure, consists of a catalytic RNA component (M1 or rnpB) and a protein subunit.

The enzyme catalyses Endonucleolytic cleavage of RNA, removing 5'-extranucleotides from tRNA precursor.. In terms of biological role, RNaseP catalyzes the removal of the 5'-leader sequence from pre-tRNA to produce the mature 5'-terminus. It can also cleave other RNA substrates such as 4.5S RNA. The protein component plays an auxiliary but essential role in vivo by binding to the 5'-leader sequence and broadening the substrate specificity of the ribozyme. The protein is Ribonuclease P protein component of Edwardsiella ictaluri (strain 93-146).